The following is an 86-amino-acid chain: Small ribosomal subunit protein bS20 (86 aa).

This sequence belongs to the bacterial ribosomal protein bS20 family.

Its function is as follows. Binds directly to 16S ribosomal RNA. The polypeptide is Small ribosomal subunit protein bS20 (Pelagibacter ubique (strain HTCC1062)).